The primary structure comprises 211 residues: Guanylate kinase (211 aa).

The region spanning 7–185 is the Guanylate kinase-like domain; it reads GLLIVVTGPS…AVAELRAIIM (179 aa). Residue 14-21 coordinates ATP; sequence GPSAVGKG.

The protein belongs to the guanylate kinase family.

The protein localises to the cytoplasm. The enzyme catalyses GMP + ATP = GDP + ADP. Functionally, essential for recycling GMP and indirectly, cGMP. The protein is Guanylate kinase of Symbiobacterium thermophilum (strain DSM 24528 / JCM 14929 / IAM 14863 / T).